A 54-amino-acid polypeptide reads, in one-letter code: Ovomucoid (54 aa).

In terms of domain architecture, Kazal-like spans 4–54 (VDCSDYPRPVCTLDYMPLCGSDNKTYSNKCNFCNAVVDSNGTITLSHFGRC). 3 cysteine pairs are disulfide-bonded: C6/C36, C14/C33, and C22/C54. A glycan (N-linked (GlcNAc...) asparagine) is linked at N43.

Its subcellular location is the secreted. The protein is Ovomucoid of Corvus albus (Pied crow).